The sequence spans 355 residues: 3-dehydroquinate synthase (355 aa).

NAD(+) is bound by residues 71-76 (EGEERK), 105-109 (GVVGD), 129-130 (TS), K142, and K151. E184, H246, and H263 together coordinate Zn(2+).

It belongs to the sugar phosphate cyclases superfamily. Dehydroquinate synthase family. It depends on NAD(+) as a cofactor. Requires Co(2+) as cofactor. Zn(2+) serves as cofactor.

The protein resides in the cytoplasm. The catalysed reaction is 7-phospho-2-dehydro-3-deoxy-D-arabino-heptonate = 3-dehydroquinate + phosphate. Its pathway is metabolic intermediate biosynthesis; chorismate biosynthesis; chorismate from D-erythrose 4-phosphate and phosphoenolpyruvate: step 2/7. Catalyzes the conversion of 3-deoxy-D-arabino-heptulosonate 7-phosphate (DAHP) to dehydroquinate (DHQ). This is 3-dehydroquinate synthase from Streptococcus pneumoniae (strain ATCC BAA-255 / R6).